We begin with the raw amino-acid sequence, 769 residues long: Spastin (769 aa).

Residues 1–100 are disordered; the sequence is MVRTKNQSSS…TSGNVPRGGQ (100 aa). At 1 to 113 the chain is on the cytoplasmic side; the sequence is MVRTKNQSSS…KQNLYVVSFP (113 aa). Residues 1-201 form a required for localization to punctate cytoplasmic foci region; it reads MVRTKNQSSS…QTLEMAASRG (201 aa). Low complexity predominate over residues 8–19; sequence SSSSSASSSTKS. Residues 24–33 show a composition bias toward gly residues; sequence SGGGGGGGGS. The span at 54–63 shows a compositional bias: polar residues; that stretch reads SSKLSSNRQR. Over residues 64–78 the composition is skewed to low complexity; that stretch reads TTTTITTTTTTPGSS. The helical intramembrane region spans 114-134; that stretch reads IIFLFNVLRSLIYQLFCIFRY. Topologically, residues 135–769 are cytoplasmic; sequence LYGASTKVIY…WSQDYGDITI (635 aa). A sufficient for interaction with microtubules and microtubule severing region spans residues 199–769; it reads SRGGTGAGGY…WSQDYGDITI (571 aa). One can recognise an MIT domain in the interval 224–299; the sequence is HRRAFEYISK…SMARDRLHFL (76 aa). Residues 314 to 462 form a disordered region; sequence KEQPKKQLPH…NAASGSGSGA (149 aa). Low complexity predominate over residues 334–344; sequence TTTSSGSSSSS. 2 stretches are compositionally biased toward polar residues: residues 395–413 and 434–450; these read NKSQ…STSV and QFSS…RTPI. Positions 451-462 are enriched in low complexity; it reads NNNAASGSGSGA. Positions 452-466 are required for interaction with microtubules; the sequence is NNAASGSGSGASTPL. Residue 534 to 541 coordinates ATP; it reads GPPGNGKT.

This sequence belongs to the AAA ATPase family. Spastin subfamily. As to quaternary structure, homohexamer. The homohexamer is stabilized by ATP-binding. The homohexamer may adopt a ring conformation through which microtubules pass prior to being severed. Interacts with microtubules. Interacts with atl; may be involved in microtubule dynamics.

The protein resides in the membrane. The protein localises to the cytoplasm. Its subcellular location is the cytoskeleton. It is found in the microtubule organizing center. It localises to the centrosome. The protein resides in the chromosome. The protein localises to the lipid droplet. It carries out the reaction n ATP + n H2O + a microtubule = n ADP + n phosphate + (n+1) alpha/beta tubulin heterodimers.. ATP-dependent microtubule severing protein. Stimulates microtubule minus-end depolymerization and poleward microtubule flux in the mitotic spindle. Regulates microtubule stability in the neuromuscular junction synapse. Involved in lipid metabolism by regulating the size and distribution of lipid droplets. Involved in axon regeneration by regulating microtubule severing. The sequence is that of Spastin from Drosophila virilis (Fruit fly).